The chain runs to 671 residues: Tail sheath protein (671 aa).

Belongs to the myoviridae tail sheath protein family. As to quaternary structure, homomultimer.

It is found in the virion. The protein localises to the host cytoplasm. Its function is as follows. Polymerizes as an extended structure around the baseplate-tail tube complex. During ejection, the sheath shifts to a contracted form, thereby making the inner tail tube protrude through the host cell envelope. The polypeptide is Tail sheath protein (Vibrio phage KVP40 (isolate Vibrio parahaemolyticus/Japan/Matsuzaki/1991) (KVP40)).